A 925-amino-acid polypeptide reads, in one-letter code: Bifunctional imidazolonepropionase/histidine ammonia-lyase (925 aa).

Positions 1-414 (MTKNSSTVFT…IKPHVRMEPF (414 aa)) are imidazolonepropionase. Residues His-73 and His-75 each coordinate Fe(3+). His-73 and His-75 together coordinate Zn(2+). 4-imidazolone-5-propanoate is bound by residues Arg-82, Tyr-145, and His-178. Residue Tyr-145 participates in N-formimidoyl-L-glutamate binding. Residue His-243 participates in Fe(3+) binding. His-243 contacts Zn(2+). Gln-246 provides a ligand contact to 4-imidazolone-5-propanoate. Asp-318 contributes to the Fe(3+) binding site. Zn(2+) is bound at residue Asp-318. 2 residues coordinate N-formimidoyl-L-glutamate: Asn-320 and Gly-322. 4-imidazolone-5-propanoate is bound at residue Thr-323. Positions 415 to 925 (MTIILKPGSV…SAGILPDLEA (511 aa)) are histidine ammonia-lyase. Positions 556-558 (ASG) form a cross-link, 5-imidazolinone (Ala-Gly). 2,3-didehydroalanine (Ser) is present on Ser-557.

This sequence in the N-terminal section; belongs to the metallo-dependent hydrolases superfamily. HutI family. It in the C-terminal section; belongs to the PAL/histidase family. Requires Zn(2+) as cofactor. The cofactor is Fe(3+). Contains an active site 4-methylidene-imidazol-5-one (MIO), which is formed autocatalytically by cyclization and dehydration of residues Ala-Ser-Gly.

It localises to the cytoplasm. It carries out the reaction 4-imidazolone-5-propanoate + H2O = N-formimidoyl-L-glutamate. It catalyses the reaction L-histidine = trans-urocanate + NH4(+). The protein operates within amino-acid degradation; L-histidine degradation into L-glutamate; N-formimidoyl-L-glutamate from L-histidine: step 1/3. It functions in the pathway amino-acid degradation; L-histidine degradation into L-glutamate; N-formimidoyl-L-glutamate from L-histidine: step 3/3. Its function is as follows. Catalyzes the hydrolytic cleavage of the carbon-nitrogen bond in imidazolone-5-propanoate to yield N-formimidoyl-L-glutamate. It is the third step in the universal histidine degradation pathway. In Brucella melitensis biotype 1 (strain ATCC 23456 / CCUG 17765 / NCTC 10094 / 16M), this protein is Bifunctional imidazolonepropionase/histidine ammonia-lyase (hutIH).